Reading from the N-terminus, the 129-residue chain is Holo-[acyl-carrier-protein] synthase (129 aa).

Mg(2+)-binding residues include Asp8 and Glu58.

This sequence belongs to the P-Pant transferase superfamily. AcpS family. The cofactor is Mg(2+).

The protein localises to the cytoplasm. The catalysed reaction is apo-[ACP] + CoA = holo-[ACP] + adenosine 3',5'-bisphosphate + H(+). Transfers the 4'-phosphopantetheine moiety from coenzyme A to a Ser of acyl-carrier-protein. The chain is Holo-[acyl-carrier-protein] synthase from Acidithiobacillus ferrooxidans (strain ATCC 53993 / BNL-5-31) (Leptospirillum ferrooxidans (ATCC 53993)).